A 209-amino-acid polypeptide reads, in one-letter code: Geminin (209 aa).

The tract at residues 1-79 (MNPSMKQKQE…PESSENKNLG (79 aa)) is disordered. The span at 7-16 (QKQEEIKENI) shows a compositional bias: basic and acidic residues. K27 bears the N6-acetyllysine mark. S34, S36, S49, S63, and S64 each carry phosphoserine. The interval 82-161 (TQESFDLMIK…AELIERLNGE (80 aa)) is necessary and sufficient for interaction with IDAS and CDT1. Residues 94-144 (PSSQYWKEVAEKRRKALYEALKENEKLHKEIEQKDNEIARLKKENKELAEV) adopt a coiled-coil conformation. The segment at 164-209 (DNFESLDNQEFDSEEETVEDSLVEDSEIGTCAEGTVSSSTDAKPCI) is disordered. The segment at 170–190 (DNQEFDSEEETVEDSLVEDSE) is homeodomain binding. Residues 170–190 (DNQEFDSEEETVEDSLVEDSE) show a composition bias toward acidic residues. A Phosphoserine; by CK2 modification is found at S184. Polar residues predominate over residues 198-209 (TVSSSTDAKPCI).

The protein belongs to the geminin family. Homotetramer. Interacts with CDT1; this inhibits binding of the MCM complex to origins of replication. The complex with CDT1 exists in two forms, a 'permissive' heterotrimer and an 'inhibitory' heterohexamer. Interacts (via coiled-coil domain) with IDAS (via coiled-coil domain); this targets GMNN to the nucleus. The heterodimer formed by GMNN and MCIDAS has much lower affinity for CDT1 than the GMNN homodimer. Interacts with a subset of Hox proteins, affinity increasing from anterior to posterior types, the strongest interaction being with HOXB1, HOXC9 and HOXD10. Interacts with LRWD1 from G1/S to mitosis. Phosphorylated during mitosis. Phosphorylation at Ser-184 by CK2 results in enhanced binding to Hox proteins and more potent inhibitory effect on Hox transcriptional activity.

The protein localises to the cytoplasm. It localises to the nucleus. Functionally, inhibits DNA replication by preventing the incorporation of MCM complex into pre-replication complex (pre-RC). It is degraded during the mitotic phase of the cell cycle. Its destruction at the metaphase-anaphase transition permits replication in the succeeding cell cycle. Inhibits histone acetyltransferase activity of KAT7/HBO1 in a CDT1-dependent manner, inhibiting histone H4 acetylation and DNA replication licensing. Inhibits the transcriptional activity of a subset of Hox proteins, enrolling them in cell proliferative control. The protein is Geminin (GMNN) of Homo sapiens (Human).